Here is a 119-residue protein sequence, read N- to C-terminus: Ribonuclease P protein component (119 aa).

Belongs to the RnpA family. In terms of assembly, consists of a catalytic RNA component (M1 or rnpB) and a protein subunit.

It catalyses the reaction Endonucleolytic cleavage of RNA, removing 5'-extranucleotides from tRNA precursor.. Functionally, RNaseP catalyzes the removal of the 5'-leader sequence from pre-tRNA to produce the mature 5'-terminus. It can also cleave other RNA substrates such as 4.5S RNA. The protein component plays an auxiliary but essential role in vivo by binding to the 5'-leader sequence and broadening the substrate specificity of the ribozyme. This Streptococcus pyogenes serotype M1 protein is Ribonuclease P protein component.